We begin with the raw amino-acid sequence, 390 residues long: Magnesium-protoporphyrin IX monomethyl ester [oxidative] cyclase (390 aa).

Residues 1–20 are disordered; it reads MSQSTIESTNKKEINKGKAP.

Belongs to the AcsF family. Fe cation is required as a cofactor.

The catalysed reaction is Mg-protoporphyrin IX 13-monomethyl ester + 3 NADPH + 3 O2 + 2 H(+) = 3,8-divinyl protochlorophyllide a + 3 NADP(+) + 5 H2O. Its pathway is porphyrin-containing compound metabolism; chlorophyll biosynthesis (light-independent). Catalyzes the formation of the isocyclic ring in chlorophyll biosynthesis. Mediates the cyclase reaction, which results in the formation of divinylprotochlorophyllide (Pchlide) characteristic of all chlorophylls from magnesium-protoporphyrin IX 13-monomethyl ester (MgPMME). This chain is Magnesium-protoporphyrin IX monomethyl ester [oxidative] cyclase, found in Prochlorococcus marinus (strain MIT 9301).